The sequence spans 364 residues: Aminomethyltransferase (364 aa).

Belongs to the GcvT family. In terms of assembly, the glycine cleavage system is composed of four proteins: P, T, L and H.

It catalyses the reaction N(6)-[(R)-S(8)-aminomethyldihydrolipoyl]-L-lysyl-[protein] + (6S)-5,6,7,8-tetrahydrofolate = N(6)-[(R)-dihydrolipoyl]-L-lysyl-[protein] + (6R)-5,10-methylene-5,6,7,8-tetrahydrofolate + NH4(+). Its function is as follows. The glycine cleavage system catalyzes the degradation of glycine. This is Aminomethyltransferase from Salmonella dublin (strain CT_02021853).